The sequence spans 597 residues: Glypican-3 (597 aa).

The signal sequence occupies residues 1–24 (MAGTVRTACLLVAMLLGLGCLGQA). Position 25 is a pyrrolidone carboxylic acid (glutamine 25). Disulfide bonds link cysteine 34–cysteine 71, cysteine 64–cysteine 261, cysteine 72–cysteine 264, cysteine 196–cysteine 348, cysteine 251–cysteine 284, cysteine 273–cysteine 421, and cysteine 277–cysteine 409. N-linked (GlcNAc...) asparagine glycosylation is found at asparagine 123 and asparagine 240. Serine 351 carries the phosphoserine modification. An N-linked (GlcNAc...) asparagine glycan is attached at asparagine 417. O-linked (Xyl...) (glycosaminoglycan) serine glycosylation is found at serine 494 and serine 508. The interval 533–553 (DAPGNKQHGNQKDNEITTSHS) is disordered.

This sequence belongs to the glypican family. In terms of assembly, heterodimer; disulfide-linked. Cleavage by a furin-like convertase results in production of alpha and beta chains which form a disulfide-linked heterodimer. Interacts with DPP4. Interacts with FGF2. Interacts with WNT5A. Also interacts with WNT3A and WNT7B. Interacts with hedgehog protein SHH; the heparan sulfate chains are not required for the interaction. Also interacts with hedgehog protein IHH. Interacts with CD81. Interacts with Wnt receptors FZD4, FZD7 and FZD8; the heparan sulfate chains are required for the interaction. O-glycosylated; contains heparan sulfate and/or chondroitin sulfate. In terms of processing, cleaved intracellularly by a furin-like convertase to generate 2 subunits, alpha and beta, which remain associated through disulfide bonds and are associated with the cell surface via the GPI-anchor. This processing is essential for its role in inhibition of hedgehog signaling. A second proteolytic event may result in cleavage of the protein on the cell surface, separating it from the GPI-anchor and leading to its shedding from the cell surface.

The protein localises to the cell membrane. Cell surface proteoglycan. Negatively regulates the hedgehog signaling pathway when attached via the GPI-anchor to the cell surface by competing with the hedgehog receptor PTC1 for binding to hedgehog proteins. Binding to the hedgehog protein SHH triggers internalization of the complex by endocytosis and its subsequent lysosomal degradation. Positively regulates the canonical Wnt signaling pathway by binding to the Wnt receptor Frizzled and stimulating the binding of the Frizzled receptor to Wnt ligands. Positively regulates the non-canonical Wnt signaling pathway. Binds to CD81 which decreases the availability of free CD81 for binding to the transcriptional repressor HHEX, resulting in nuclear translocation of HHEX and transcriptional repression. Inhibits the dipeptidyl peptidase activity of DPP4. Plays a role in limb patterning and skeletal development by controlling the cellular response to BMP4. Modulates the effects of growth factors BMP2, BMP7 and FGF7 on renal branching morphogenesis. Required for coronary vascular development. Plays a role in regulating cell movements during gastrulation. The sequence is that of Glypican-3 (Gpc3) from Rattus norvegicus (Rat).